We begin with the raw amino-acid sequence, 526 residues long: Lysine--tRNA ligase (526 aa).

2 residues coordinate Mg(2+): Glu-431 and Glu-438.

This sequence belongs to the class-II aminoacyl-tRNA synthetase family. Homodimer. It depends on Mg(2+) as a cofactor.

Its subcellular location is the cytoplasm. It carries out the reaction tRNA(Lys) + L-lysine + ATP = L-lysyl-tRNA(Lys) + AMP + diphosphate. The protein is Lysine--tRNA ligase of Chlamydia trachomatis serovar L2b (strain UCH-1/proctitis).